The chain runs to 459 residues: Asparagine--tRNA ligase (459 aa).

Belongs to the class-II aminoacyl-tRNA synthetase family. In terms of assembly, homodimer.

Its subcellular location is the cytoplasm. The enzyme catalyses tRNA(Asn) + L-asparagine + ATP = L-asparaginyl-tRNA(Asn) + AMP + diphosphate + H(+). This is Asparagine--tRNA ligase from Pelobacter propionicus (strain DSM 2379 / NBRC 103807 / OttBd1).